A 447-amino-acid polypeptide reads, in one-letter code: Protein mab-21-like 4 (447 aa).

The sequence is that of Protein mab-21-like 4 from Homo sapiens (Human).